Consider the following 350-residue polypeptide: Galactokinase (350 aa).

15 to 18 is a substrate binding site; that stretch reads EHTD. ATP-binding positions include Ser-47 and 99–105; that span reads GAGLSSS. 2 residues coordinate Mg(2+): Ser-105 and Glu-137. Asp-149 acts as the Proton acceptor in catalysis. Tyr-198 contacts substrate.

This sequence belongs to the GHMP kinase family. GalK subfamily.

Its subcellular location is the cytoplasm. It carries out the reaction alpha-D-galactose + ATP = alpha-D-galactose 1-phosphate + ADP + H(+). Its pathway is carbohydrate metabolism; galactose metabolism. Functionally, catalyzes the transfer of the gamma-phosphate of ATP to D-galactose to form alpha-D-galactose-1-phosphate (Gal-1-P). In Pyrococcus horikoshii (strain ATCC 700860 / DSM 12428 / JCM 9974 / NBRC 100139 / OT-3), this protein is Galactokinase.